Here is a 452-residue protein sequence, read N- to C-terminus: Bifunctional protein GlmU (452 aa).

Residues 1–226 form a pyrophosphorylase region; sequence MNFSAVILAA…PIEVEGVNDR (226 aa). UDP-N-acetyl-alpha-D-glucosamine is bound by residues 8–11, Lys22, Gln73, 78–79, 100–102, Gly137, Glu151, Asn166, and Asn224; these read LAAG, GT, and YGD. Asp102 is a binding site for Mg(2+). Residue Asn224 participates in Mg(2+) binding. The segment at 227 to 247 is linker; it reads AQLARLERAYQAAQAQKLLEQ. An N-acetyltransferase region spans residues 248–452; the sequence is GVMLRDPSRF…IANWQRPTKK (205 aa). UDP-N-acetyl-alpha-D-glucosamine contacts are provided by Arg330 and Lys348. His360 acts as the Proton acceptor in catalysis. Residues Tyr363 and Asn374 each coordinate UDP-N-acetyl-alpha-D-glucosamine. Acetyl-CoA is bound by residues Ala377, 383–384, Ser402, Ala420, and Arg437; that span reads NY.

The protein in the N-terminal section; belongs to the N-acetylglucosamine-1-phosphate uridyltransferase family. In the C-terminal section; belongs to the transferase hexapeptide repeat family. In terms of assembly, homotrimer. It depends on Mg(2+) as a cofactor.

Its subcellular location is the cytoplasm. The catalysed reaction is alpha-D-glucosamine 1-phosphate + acetyl-CoA = N-acetyl-alpha-D-glucosamine 1-phosphate + CoA + H(+). It carries out the reaction N-acetyl-alpha-D-glucosamine 1-phosphate + UTP + H(+) = UDP-N-acetyl-alpha-D-glucosamine + diphosphate. Its pathway is nucleotide-sugar biosynthesis; UDP-N-acetyl-alpha-D-glucosamine biosynthesis; N-acetyl-alpha-D-glucosamine 1-phosphate from alpha-D-glucosamine 6-phosphate (route II): step 2/2. It functions in the pathway nucleotide-sugar biosynthesis; UDP-N-acetyl-alpha-D-glucosamine biosynthesis; UDP-N-acetyl-alpha-D-glucosamine from N-acetyl-alpha-D-glucosamine 1-phosphate: step 1/1. The protein operates within bacterial outer membrane biogenesis; LPS lipid A biosynthesis. Its function is as follows. Catalyzes the last two sequential reactions in the de novo biosynthetic pathway for UDP-N-acetylglucosamine (UDP-GlcNAc). The C-terminal domain catalyzes the transfer of acetyl group from acetyl coenzyme A to glucosamine-1-phosphate (GlcN-1-P) to produce N-acetylglucosamine-1-phosphate (GlcNAc-1-P), which is converted into UDP-GlcNAc by the transfer of uridine 5-monophosphate (from uridine 5-triphosphate), a reaction catalyzed by the N-terminal domain. The sequence is that of Bifunctional protein GlmU from Aliivibrio fischeri (strain ATCC 700601 / ES114) (Vibrio fischeri).